Reading from the N-terminus, the 496-residue chain is E3 ubiquitin-protein ligase CBL-C (496 aa).

The interval 7–144 (PRGWQRGEPR…SALFPAGKYC (138 aa)) is 4H. The Cbl-PTB domain occupies 7–320 (PRGWQRGEPR…GKKHNPDLTE (314 aa)). Positions 145–217 (GHLYQLTKGS…FEFDVFTRLF (73 aa)) are EF-hand-like. The Ca(2+) site is built by D198, T200, N202, and E209. Positions 218–320 (QPWPTLLRNW…GKKHNPDLTE (103 aa)) are SH2-like. R263 contacts 4-O-phospho-L-tyrosine. The linker stretch occupies residues 321 to 349 (LCRVEPYQRIQVSEEQLLLYQAMNSTFQL). Y340 carries the phosphotyrosine; by SRC modification. The segment at 350 to 389 (CKICAERDKDVRIEPCGHLLCSCCLAAWQDSDSQTCPFCR) adopts an RING-type zinc-finger fold. An interaction with RET region spans residues 350-494 (CKICAERDKD…RPRAREEATE (145 aa)). The disordered stretch occupies residues 432-453 (PVIPSAPSLLPEDQFPQGPQDK).

In terms of assembly, interacts with Ubiquitin-conjugating enzyme E2 UBE2D2 and UBE2D3. Isoform 1 interacts with EGFR (tyrosine phosphorylated). Interacts with the SH3 domain proteins LYN and CRK. Interacts (via RING-type zinc finger) with TGFB1I1 (via LIM zinc-binding domain 2); the interaction is direct and enhances the E3 activity. Interacts directly with RET (inactive) and CD2AP; dissociates from RET upon RET activation by GDNF which also increases the interaction with CD2AP suggesting dissociation as CBLC:CD2AP complex. Interacts with SRC; the interaction is enhanced when SRC is phosphorylated at 'Tyr-419'. In terms of processing, phosphorylated on tyrosines by EGFR. Post-translationally, phosphorylated on multiple tyrosine residues by SRC. Isoform 1, but not isoform 2, is phosphorylated on tyrosines by EGFR. Autoubiquitinated, when phosphorylated at Tyr-340. In terms of tissue distribution, widely expressed in tissues, where the expression is restricted to epithelial cells (at protein level).

The enzyme catalyses S-ubiquitinyl-[E2 ubiquitin-conjugating enzyme]-L-cysteine + [acceptor protein]-L-lysine = [E2 ubiquitin-conjugating enzyme]-L-cysteine + N(6)-ubiquitinyl-[acceptor protein]-L-lysine.. Its activity is regulated as follows. Phosphorylation at Tyr-340 is necessary and sufficient for the activation of E3 activity. Functionally, acts as an E3 ubiquitin-protein ligase, which accepts ubiquitin from specific E2 ubiquitin-conjugating enzymes, and then transfers it to substrates promoting their degradation by the proteasome. Functionally coupled with the E2 ubiquitin-protein ligases UB2D1, UB2D2 and UB2D3. Regulator of EGFR mediated signal transduction; upon EGF activation, ubiquitinates EGFR. Isoform 1, but not isoform 2, inhibits EGF stimulated MAPK1 activation. Promotes ubiquitination of SRC phosphorylated at 'Tyr-424', has the highest ubiquitin ligase activity among CBL family proteins. In collaboration with CD2AP may act as regulatory checkpoint for Ret signaling by modulating the rate of RET degradation after ligand activation; CD2AP converts it from an inhibitor to a promoter of RET degradation; the function limits the potency of GDNF on neuronal survival. The chain is E3 ubiquitin-protein ligase CBL-C (Cblc) from Mus musculus (Mouse).